Here is a 141-residue protein sequence, read N- to C-terminus: ATP synthase epsilon chain (141 aa).

This sequence belongs to the ATPase epsilon chain family. In terms of assembly, F-type ATPases have 2 components, CF(1) - the catalytic core - and CF(0) - the membrane proton channel. CF(1) has five subunits: alpha(3), beta(3), gamma(1), delta(1), epsilon(1). CF(0) has three main subunits: a, b and c.

Its subcellular location is the cell membrane. In terms of biological role, produces ATP from ADP in the presence of a proton gradient across the membrane. This is ATP synthase epsilon chain from Lactococcus lactis subsp. lactis (strain IL1403) (Streptococcus lactis).